Reading from the N-terminus, the 494-residue chain is MSNYSGLNEECGVFGIWNHPEAAQLTYMGLHSLQHRGQEGAGIVVSNHETLKGERGLGLLTEAIKDEHMSNIKGYPHAIGHVRYATSGNKGIENIQPFLYHFYDMSVGICHNGNLINAKSLRQNLEEQGAIFHSSSDTEVIMHLIRRSKAPTFEEALKESLRLIKGGFTFAILTKDALYGVVDPNAIRPLVVGKMENGAYILASETCAIDVLGAEFIQDIHAGEYVVITDEGIEVKTYTRQTTTAISAMEYIYFARPDSTIAGKNVHAVRKASGKRLAQENPAKADMVIGVPNSSLSAASGYAEEIGLPYEMGLVKNQYVARTFIQPTQELREQGVRVKLSAVKDIVDGKDIVLVDDSIVRGTTIKRIVKMLKDSGANRIHVRIASPEFMFPSFYGIDVSTTAELISASKSPEEIKNHIGADSLAYLSVDGLIESIGLDYDAPYHGLCVESFTGDYPAGLYDYEKNYKKHLSERQKSYIANNKHYFDSEGNLHV.

The propeptide occupies 1 to 10; that stretch reads MSNYSGLNEE. The active-site Nucleophile is the C11. Positions 11-231 constitute a Glutamine amidotransferase type-2 domain; the sequence is CGVFGIWNHP…AGEYVVITDE (221 aa). Mg(2+) is bound by residues S294, D356, and D357.

In the C-terminal section; belongs to the purine/pyrimidine phosphoribosyltransferase family. The cofactor is Mg(2+).

It carries out the reaction 5-phospho-beta-D-ribosylamine + L-glutamate + diphosphate = 5-phospho-alpha-D-ribose 1-diphosphate + L-glutamine + H2O. It participates in purine metabolism; IMP biosynthesis via de novo pathway; N(1)-(5-phospho-D-ribosyl)glycinamide from 5-phospho-alpha-D-ribose 1-diphosphate: step 1/2. In terms of biological role, catalyzes the formation of phosphoribosylamine from phosphoribosylpyrophosphate (PRPP) and glutamine. The polypeptide is Amidophosphoribosyltransferase (Staphylococcus epidermidis (strain ATCC 35984 / DSM 28319 / BCRC 17069 / CCUG 31568 / BM 3577 / RP62A)).